The following is a 164-amino-acid chain: Phosphopantetheine adenylyltransferase (164 aa).

Threonine 9 contributes to the substrate binding site. ATP is bound by residues 9 to 10 (TF) and histidine 17. Positions 41, 73, and 87 each coordinate substrate. Residues 88-90 (GLR), glutamate 98, and 123-129 (YMFISAT) each bind ATP.

It belongs to the bacterial CoaD family. In terms of assembly, homohexamer. Mg(2+) serves as cofactor.

It localises to the cytoplasm. It carries out the reaction (R)-4'-phosphopantetheine + ATP + H(+) = 3'-dephospho-CoA + diphosphate. It participates in cofactor biosynthesis; coenzyme A biosynthesis; CoA from (R)-pantothenate: step 4/5. In terms of biological role, reversibly transfers an adenylyl group from ATP to 4'-phosphopantetheine, yielding dephospho-CoA (dPCoA) and pyrophosphate. The sequence is that of Phosphopantetheine adenylyltransferase from Nitrosomonas eutropha (strain DSM 101675 / C91 / Nm57).